Here is a 643-residue protein sequence, read N- to C-terminus: MPGSTGQPDAGGAGTGTTAGDPGHPHPALAGAEDAAPRPPPEPDDAAAALRLALDQLSALGLGGARPGDEGMATRSADGATECGEDEPAPPDELEVAVAPPVTASVAPGGLPLLDPDVSPRPSPPDVFASFAPHPAALGPSTLLAEQLNVIGSRKKSVNMTECVPVPSSEHVAEIVGRQGCKIKALRAKTNTYIKTPVRGEEPVFIVTGRKEDVEMAKREILSAEHFSLIRATRSKAGGLSGATPGPPNLPGQTTIQVRVPYRVVGLVVGPKGATIKRIQQRTHTYIVTPGRDKEPVFAVTGMPENVDRAREEIEAHITLRTGAFTDSGPDSDFHANGTDVCLDLLGAAASLWAKAPHPGRRPPAATGGLRGDNALGAASTPEPFYVGSRGGPPLPDPSPSSPYGGSGNGGFTFGGDGPSAPTGTATPEDCDFGFDFLALDLTVPATATIWAPFERAAPLPAFSGCPAVNGAPAQPNTGTRRSSGGGAATTPRHSPTLPEPGGLSLELPLARRSVPDPVGAVPWRPPQSALPPFSGSTTFSTTPSLPSTTLASSTLDTVPSEGNHKPSTTAANSSASTAAPGPPSAALARECVVCSEGEAMAALVPCGHNLFCMDCAVRICGKSEPECPACRTPATQAIHIFS.

2 disordered regions span residues 1–48 (MPGS…DAAA) and 61–92 (GLGGARPGDEGMATRSADGATECGEDEPAPPD). Positions 18–34 (TAGDPGHPHPALAGAED) are enriched in low complexity. Residues 83–92 (CGEDEPAPPD) show a composition bias toward acidic residues. KH domains follow at residues 160-221 (MTEC…KREI) and 253-314 (QTTI…REEI). 3 disordered regions span residues 357–427 (PHPG…GTAT), 471–505 (GAPAQPNTGTRRSSGGGAATTPRHSPTLPEPGGLS), and 519–583 (VGAV…APGP). The segment covering 405–418 (GGSGNGGFTFGGDG) has biased composition (gly residues). Position 491 is a phosphothreonine (threonine 491). Serine 495 is subject to Phosphoserine. 3 stretches are compositionally biased toward low complexity: residues 495 to 505 (SPTLPEPGGLS), 531 to 556 (LPPFSGSTTFSTTPSLPSTTLASSTL), and 567 to 583 (PSTTAANSSASTAAPGP). The segment at 592–632 (CVVCSEGEAMAALVPCGHNLFCMDCAVRICGKSEPECPACR) adopts an RING-type zinc-finger fold.

The protein resides in the cytoplasm. It is found in the nucleus. Its function is as follows. RNA binding protein, may be involved in post-transcriptional regulatory mechanisms. The protein is RNA-binding protein MEX3D (Mex3d) of Mus musculus (Mouse).